The chain runs to 169 residues: S-ribosylhomocysteine lyase (169 aa).

Fe cation-binding residues include His-54, His-58, and Cys-128.

Belongs to the LuxS family. As to quaternary structure, homodimer. The cofactor is Fe cation.

The enzyme catalyses S-(5-deoxy-D-ribos-5-yl)-L-homocysteine = (S)-4,5-dihydroxypentane-2,3-dione + L-homocysteine. In terms of biological role, involved in the synthesis of autoinducer 2 (AI-2) which is secreted by bacteria and is used to communicate both the cell density and the metabolic potential of the environment. The regulation of gene expression in response to changes in cell density is called quorum sensing. Catalyzes the transformation of S-ribosylhomocysteine (RHC) to homocysteine (HC) and 4,5-dihydroxy-2,3-pentadione (DPD). This Shewanella sediminis (strain HAW-EB3) protein is S-ribosylhomocysteine lyase.